The primary structure comprises 584 residues: Poly(A) RNA polymerase protein 2 (584 aa).

The span at 1-11 (MGAKSVTASSS) shows a compositional bias: polar residues. Disordered stretches follow at residues 1–63 (MGAK…LPKD) and 81–147 (EGFD…QELE). A compositionally biased stretch (basic residues) spans 12 to 35 (KKIKNRHNGKVKKSKKIKKVRKPQ). Positions 53 to 63 (NEQETNKLPKD) are enriched in basic and acidic residues. Residues 130–139 (SEDEQAEQEE) show a composition bias toward acidic residues. Mg(2+)-binding residues include aspartate 236 and aspartate 238. Residues glycine 301, lysine 326, asparagine 431, and arginine 435 each contribute to the ATP site. The PAP-associated domain maps to 371–431 (NLGVLLIEFF…AIQDPGDESN (61 aa)). The disordered stretch occupies residues 525–584 (TSTATATTTDDDYEITNPPAKKAKIEEKPESEPAKRNSGETYITVSSEDDDEDGYNPYTL). A compositionally biased stretch (basic and acidic residues) spans 547–562 (AKIEEKPESEPAKRNS).

The protein belongs to the DNA polymerase type-B-like family. Component of the TRAMP complex (also called TRF4 complex) composed of at least HUL4, MTR4, PAP2/TRF4 and either AIR1 or AIR2. Interacts with NOP53 and POL2. Interacts directly with AIR2. Mg(2+) serves as cofactor. The cofactor is Mn(2+).

The protein resides in the nucleus. The enzyme catalyses RNA(n) + ATP = RNA(n)-3'-adenine ribonucleotide + diphosphate. Functionally, catalytic subunit of the TRAMP complex which has a poly(A) RNA polymerase activity and is involved in a post-transcriptional quality control mechanism limiting inappropriate expression of genetic information. Polyadenylation is required for the degradative activity of the exosome on several of its nuclear RNA substrates like cryptic transcripts generated by RNA polymerase II and III, or hypomethylated pre-tRNAi-Met. Polyadenylates RNA processing and degradation intermediates of snRNAs, snoRNAs and mRNAs that accumulate in strains lacking a functional exosome. TRF4 is also required for proper nuclear division in mitosis, DNA damage repair and sister chromatid cohesion. Involved in the regulation of histone mRNA levels. May mediate mitotic chromosome condensation. The polypeptide is Poly(A) RNA polymerase protein 2 (PAP2) (Saccharomyces cerevisiae (strain ATCC 204508 / S288c) (Baker's yeast)).